Here is a 176-residue protein sequence, read N- to C-terminus: ATP-dependent protease subunit HslV (176 aa).

The active site involves threonine 6. Residues serine 161, cysteine 164, and threonine 167 each coordinate Na(+).

It belongs to the peptidase T1B family. HslV subfamily. A double ring-shaped homohexamer of HslV is capped on each side by a ring-shaped HslU homohexamer. The assembly of the HslU/HslV complex is dependent on binding of ATP.

Its subcellular location is the cytoplasm. It carries out the reaction ATP-dependent cleavage of peptide bonds with broad specificity.. Its activity is regulated as follows. Allosterically activated by HslU binding. In terms of biological role, protease subunit of a proteasome-like degradation complex believed to be a general protein degrading machinery. This chain is ATP-dependent protease subunit HslV, found in Pseudothermotoga lettingae (strain ATCC BAA-301 / DSM 14385 / NBRC 107922 / TMO) (Thermotoga lettingae).